The sequence spans 210 residues: CASP-like protein 3A2 (210 aa).

At 1–45 (MMMNGQKMAAAEVAVQLPESKMVTENIGGAAAAMRPFGRKAEVMN) the chain is on the cytoplasmic side. The chain crosses the membrane as a helical span at residues 46 to 66 (VLLRVLCMVTSVAALSSMVTA). Residues 67–92 (QQSSTVSIYGFMLPIQSKWSFSHSFE) lie on the Extracellular side of the membrane. The helical transmembrane segment at 93 to 113 (YVVGVSAVVAAHSLLQLLISV) threads the bilayer. Residues 114 to 128 (SRLLRKSPVIQSRSH) lie on the Cytoplasmic side of the membrane. A helical transmembrane segment spans residues 129–149 (AWLVFAGDQVFAYAMISAGAA). Residues 150 to 178 (ASGVTNLNRTGIRHTALPNFCKPLQSFCD) lie on the Extracellular side of the membrane. Asn-157 carries N-linked (GlcNAc...) asparagine glycosylation. The helical transmembrane segment at 179-199 (HVAVSIFFTFLSCFLLAASAV) threads the bilayer. Over 200–210 (QEVIWLSRSKY) the chain is Cytoplasmic.

This sequence belongs to the Casparian strip membrane proteins (CASP) family. In terms of assembly, homodimer and heterodimers.

The protein resides in the cell membrane. The chain is CASP-like protein 3A2 from Populus trichocarpa (Western balsam poplar).